Reading from the N-terminus, the 278-residue chain is MAETKDQNVLNIIIISDAAGDTAFSNATAAAAEFPNAEINYRRYPFITNLEKLDEVLKEIEKYPNLVIIFSLVKDEMQIPVIKFARDHNIQCVDIFSPVVEAIQQTTHMIPDQKIGAQHSLNQKYFDRISAMEFAVMYDDGKDPKGFLEADVVLLGVSRTSKTPLSLFLANKNLKVANLPLVPETHIPKEIYEIDPKKIIGLTNDPSVLNEIRRQRMIAYGLNPDTTYSSMDSINKELESAQALYKKLGCYVINVAHRSIEETAALILEHLGIDDYAK.

Residue 156–163 (GVSRTSKT) coordinates ADP.

It belongs to the pyruvate, phosphate/water dikinase regulatory protein family. PDRP subfamily.

It catalyses the reaction N(tele)-phospho-L-histidyl/L-threonyl-[pyruvate, phosphate dikinase] + ADP = N(tele)-phospho-L-histidyl/O-phospho-L-threonyl-[pyruvate, phosphate dikinase] + AMP + H(+). The enzyme catalyses N(tele)-phospho-L-histidyl/O-phospho-L-threonyl-[pyruvate, phosphate dikinase] + phosphate + H(+) = N(tele)-phospho-L-histidyl/L-threonyl-[pyruvate, phosphate dikinase] + diphosphate. Functionally, bifunctional serine/threonine kinase and phosphorylase involved in the regulation of the pyruvate, phosphate dikinase (PPDK) by catalyzing its phosphorylation/dephosphorylation. In Lactobacillus acidophilus (strain ATCC 700396 / NCK56 / N2 / NCFM), this protein is Putative pyruvate, phosphate dikinase regulatory protein.